The sequence spans 831 residues: MNMEQEDDQVPAVAAETVPLKRYVTNPGANRDEEVAAAPSSQDTPYFDYAYERSLRHQDAKFLAMNGTQNGRDGLPSKSPRRPSVSASTVRNSDDVNHSKAGPGSGKLLNDTLQSKISSIHMPHVQQGDNAVVSSVGGPETDPGNMETTDPLFSDELAEIYLSIHKCMDMRHKYIRVSLQGELDNPIDDDSWIIYPDCKEGEDDTGLFNFADCKIPGIENEMEYHMDHQGIFQVYENDSAYIAGTPSFHIPTIRDYYIDLEFLLSASSDGPSKSFSFRRLQYLEGRWNMYMLLNEYQELADTKKVPHRDFYNVRKVDTHVHHSALANQKHLLRFIKAKLRKCPNEKVIWRDGKFLTLQEVFDSLKLTSYDLSIDTLDMHAHTDTFHRFDKFNLKYNPIGESRLRTIFLKTDNDINGRYLAELTKEVFTDLRTQKYQMAEYRISIYGRNREEWDKLAAWIIDNELFSPNVRWLIQVPRLYDVYKKSGIVETFEEVVRNVFEPLFEVTKDPRTHPKLHVFLQRVIGFDSVDDESKPERRTFRKFPYPKHWDINLNPPYSYWLYYMYANMTSLNSWRKIRGFNTFVLRPHCGEAGDTDHLASAFLLSHGINHGILLRKVPFLQYLWYLDQIPIAMSPLSNNALFLAYDKNPFLTYFKRGLNVSLSTDDPLQFAFTREPLIEEYAVAAQIYKLSAVDMCELARNSVLQSGFERQLKERWLGVDFQDIDRTNVPIIRLAYRALTLTQEIALVNKHVQPSKHPSNHDLEELIHKYDAMTGTSDPLSASPRTNDATISSRLSLHDGHDHGAFFPGLSVISERRRRKDSMASSSQDLKD.

Disordered regions lie at residues 26 to 45, 66 to 110, and 130 to 149; these read NPGANRDEEVAAAPSSQDTP, NGTQ…KLLN, and NAVVSSVGGPETDPGNMETT. Phosphoserine occurs at positions 79 and 84. Zn(2+) contacts are provided by His319 and His321. Substrate-binding positions include His321 and 390 to 395; that span reads KFNLKY. His587 is a Zn(2+) binding site. Glu590 is a substrate binding site. Residue His609 is the Proton acceptor of the active site. Zn(2+) is bound at residue Asp664. 665 to 668 serves as a coordination point for substrate; sequence DPLQ. 4 positions are modified to phosphoserine: Ser758, Ser776, Ser780, and Ser782.

This sequence belongs to the metallo-dependent hydrolases superfamily. Adenosine and AMP deaminases family. As to quaternary structure, homotetramer. It depends on Zn(2+) as a cofactor.

It is found in the cytoplasm. It catalyses the reaction AMP + H2O + H(+) = IMP + NH4(+). The protein operates within purine metabolism; IMP biosynthesis via salvage pathway; IMP from AMP: step 1/1. AMP deaminase plays a critical role in energy metabolism. In Schizosaccharomyces pombe (strain 972 / ATCC 24843) (Fission yeast), this protein is AMP deaminase (ada1).